The primary structure comprises 98 residues: NADH-ubiquinone oxidoreductase chain 4L (98 aa).

3 consecutive transmembrane segments (helical) span residues 1–21 (MLSINLNLIVAFLLALMGVLI), 29–49 (TLLCLEGMMLSLFILMTLLIT), and 59–79 (TPLILLVFSACEAAIGLALLV).

This sequence belongs to the complex I subunit 4L family. As to quaternary structure, core subunit of respiratory chain NADH dehydrogenase (Complex I) which is composed of 45 different subunits.

The protein localises to the mitochondrion inner membrane. It catalyses the reaction a ubiquinone + NADH + 5 H(+)(in) = a ubiquinol + NAD(+) + 4 H(+)(out). In terms of biological role, core subunit of the mitochondrial membrane respiratory chain NADH dehydrogenase (Complex I) which catalyzes electron transfer from NADH through the respiratory chain, using ubiquinone as an electron acceptor. Part of the enzyme membrane arm which is embedded in the lipid bilayer and involved in proton translocation. This chain is NADH-ubiquinone oxidoreductase chain 4L (MT-ND4L), found in Sminthopsis crassicaudata (Fat-tailed dunnart).